Consider the following 446-residue polypeptide: MSRYFGTDGIRGRVGQGLISADFVLRLGNALGRVLAQGRDTRPMVLIGKDTRISGYMFESALEAGLVAAGADVQLIGPMPTPAIAFLTNTLRADAGVVISASHNPHDDNGIKFFSAMGEKLDDATEAAIEAAIEAPFLTVDSEYLGKVKRTRDAIGRYIEFSKASVPRGFTLRGLKLVLDCAHGATYHIAPMLFRELGAELVTIGVDPDGLNINAGVGSTHLETLAATVRESGADLGIAFDGDGDRVLMTDAQGRTVDGDDLLYVLARAWRASGRLKGTVVGTLMSNYGLEQALGTLGIPFIRARVGDRYVHQALVESGGVLGGEASGHLLCLDRATTGDGIVSALQVLEVLRHEGLTLSQALLGLHKVPQKTVNVCWSGPARAAVEMPEVRQALVEAQAAVQGRGRVFLRPSGTEPVVRITVEADDVVLMQQTLDRLADVVRDAA.

S102 acts as the Phosphoserine intermediate in catalysis. Mg(2+)-binding residues include S102, D241, D243, and D245. S102 bears the Phosphoserine mark.

It belongs to the phosphohexose mutase family. It depends on Mg(2+) as a cofactor. Post-translationally, activated by phosphorylation.

The catalysed reaction is alpha-D-glucosamine 1-phosphate = D-glucosamine 6-phosphate. Catalyzes the conversion of glucosamine-6-phosphate to glucosamine-1-phosphate. This is Phosphoglucosamine mutase from Xylella fastidiosa (strain M23).